A 58-amino-acid chain; its full sequence is Photosystem II reaction center protein K (58 aa).

Residues 1-21 constitute a propeptide that is removed on maturation; it reads MFDLYLKNLLDLSDSGTVVLA. The helical transmembrane segment at 29 to 49 threads the bilayer; that stretch reads IFDPIVDVLPVIPVFFLLLAF.

It belongs to the PsbK family. In terms of assembly, PSII is composed of 1 copy each of membrane proteins PsbA, PsbB, PsbC, PsbD, PsbE, PsbF, PsbH, PsbI, PsbJ, PsbK, PsbL, PsbM, PsbT, PsbX, PsbY, PsbZ, Psb30/Ycf12, at least 3 peripheral proteins of the oxygen-evolving complex and a large number of cofactors. It forms dimeric complexes.

It localises to the plastid. It is found in the chloroplast thylakoid membrane. Its function is as follows. One of the components of the core complex of photosystem II (PSII). PSII is a light-driven water:plastoquinone oxidoreductase that uses light energy to abstract electrons from H(2)O, generating O(2) and a proton gradient subsequently used for ATP formation. It consists of a core antenna complex that captures photons, and an electron transfer chain that converts photonic excitation into a charge separation. This is Photosystem II reaction center protein K from Zygnema circumcarinatum (Green alga).